Here is a 248-residue protein sequence, read N- to C-terminus: ATP synthase subunit a, chloroplastic (248 aa).

Helical transmembrane passes span 96-116 (VPFIGTMFLFIFASNWSGALL), 135-155 (INTTVALALLTSVAYFYAGLY), 200-220 (LVVAVLVSLVPLIVPVPMMLL), and 221-241 (GLFTSGIQALIFATLAAAYIG).

It belongs to the ATPase A chain family. As to quaternary structure, F-type ATPases have 2 components, CF(1) - the catalytic core - and CF(0) - the membrane proton channel. CF(1) has five subunits: alpha(3), beta(3), gamma(1), delta(1), epsilon(1). CF(0) has four main subunits: a, b, b' and c.

It localises to the plastid. Its subcellular location is the chloroplast thylakoid membrane. In terms of biological role, key component of the proton channel; it plays a direct role in the translocation of protons across the membrane. The sequence is that of ATP synthase subunit a, chloroplastic from Adiantum capillus-veneris (Maidenhair fern).